A 540-amino-acid polypeptide reads, in one-letter code: Acyl-CoA synthetase 7 (540 aa).

Residues serine 186 to lysine 194, aspartate 415, arginine 430, and lysine 522 each bind ATP. Positions alanine 538 to leucine 540 match the Microbody targeting signal motif.

The protein belongs to the ATP-dependent AMP-binding enzyme family. Expressed in intestine.

It localises to the peroxisome. It carries out the reaction nonanoate + ATP + CoA = nonanoyl-CoA + AMP + diphosphate. The catalysed reaction is IC-asc-C7 + ATP + CoA = IC-asc-C7-CoA + AMP + diphosphate. The enzyme catalyses IC-asc-C9 + ATP + CoA = IC-asc-C9-CoA + AMP + diphosphate. Plays a role in ascaroside pheromones biosynthesis, which regulates development and behavior. Specifically, activates the side chain of medium-chain indol-3-carbonyl (IC)-ascarosides for shortening through beta-oxidation. Converts IC-asc-C7 and IC-asc-C9 into IC-asc-C7-CoA and IC-asc-C9-CoA, respectively. May play a role in fatty-acid metabolism by activating and converting nonanoate (C9) into nonanoyl-CoA (C9-CoA). The chain is Acyl-CoA synthetase 7 from Caenorhabditis elegans.